Reading from the N-terminus, the 236-residue chain is tRNA (guanine-N(7)-)-methyltransferase (236 aa).

The S-adenosyl-L-methionine site is built by Asp35, Glu60, Asn87, and Asp113. Asp113 is an active-site residue. Substrate-binding residues include Lys117 and Asp149.

It belongs to the class I-like SAM-binding methyltransferase superfamily. TrmB family.

The catalysed reaction is guanosine(46) in tRNA + S-adenosyl-L-methionine = N(7)-methylguanosine(46) in tRNA + S-adenosyl-L-homocysteine. Its pathway is tRNA modification; N(7)-methylguanine-tRNA biosynthesis. Its function is as follows. Catalyzes the formation of N(7)-methylguanine at position 46 (m7G46) in tRNA. In Prochlorococcus marinus (strain MIT 9303), this protein is tRNA (guanine-N(7)-)-methyltransferase.